We begin with the raw amino-acid sequence, 63 residues long: Putative flagellar calcium-binding protein (63 aa).

A compositionally biased stretch (polar residues) spans methionine 1–threonine 11. Residues methionine 1 to lysine 23 form a disordered region. A compositionally biased stretch (basic and acidic residues) spans glycine 12 to lysine 23. An EF-hand domain is found at glutamate 40 to glutamate 63. Ca(2+) contacts are provided by aspartate 53, asparagine 55, threonine 57, and lysine 59.

This sequence belongs to the calflagin family.

It is found in the cell projection. The protein localises to the cilium. It localises to the flagellum. This is Putative flagellar calcium-binding protein (CABP) from Crithidia fasciculata.